The sequence spans 104 residues: Large ribosomal subunit protein uL24 (104 aa).

The protein belongs to the universal ribosomal protein uL24 family. As to quaternary structure, part of the 50S ribosomal subunit.

Its function is as follows. One of two assembly initiator proteins, it binds directly to the 5'-end of the 23S rRNA, where it nucleates assembly of the 50S subunit. One of the proteins that surrounds the polypeptide exit tunnel on the outside of the subunit. The polypeptide is Large ribosomal subunit protein uL24 (Bartonella bacilliformis (strain ATCC 35685 / KC583 / Herrer 020/F12,63)).